The primary structure comprises 36 residues: Photosystem I reaction center subunit VIII (36 aa).

The chain crosses the membrane as a helical span at residues 9-29 (ILVPLVGLVFPAITMVSLFLY).

The protein belongs to the PsaI family.

Its subcellular location is the plastid. The protein resides in the chloroplast thylakoid membrane. In terms of biological role, may help in the organization of the PsaL subunit. This Zygnema circumcarinatum (Green alga) protein is Photosystem I reaction center subunit VIII.